Reading from the N-terminus, the 320-residue chain is Ferrochelatase (320 aa).

Fe cation is bound by residues H194 and E275.

It belongs to the ferrochelatase family. In terms of assembly, monomer.

The protein resides in the cytoplasm. It catalyses the reaction heme b + 2 H(+) = protoporphyrin IX + Fe(2+). Its pathway is porphyrin-containing compound metabolism; protoheme biosynthesis; protoheme from protoporphyrin-IX: step 1/1. Its function is as follows. Catalyzes the ferrous insertion into protoporphyrin IX. The chain is Ferrochelatase from Salmonella schwarzengrund (strain CVM19633).